We begin with the raw amino-acid sequence, 241 residues long: Triosephosphate isomerase (241 aa).

A substrate-binding site is contributed by 9-11; sequence NWK. His-96 serves as the catalytic Electrophile. Glu-165 functions as the Proton acceptor in the catalytic mechanism. Residues Gly-171, Ser-204, and 225 to 226 contribute to the substrate site; that span reads GG.

This sequence belongs to the triosephosphate isomerase family. Homodimer.

The protein resides in the cytoplasm. It catalyses the reaction D-glyceraldehyde 3-phosphate = dihydroxyacetone phosphate. Its pathway is carbohydrate biosynthesis; gluconeogenesis. It functions in the pathway carbohydrate degradation; glycolysis; D-glyceraldehyde 3-phosphate from glycerone phosphate: step 1/1. In terms of biological role, involved in the gluconeogenesis. Catalyzes stereospecifically the conversion of dihydroxyacetone phosphate (DHAP) to D-glyceraldehyde-3-phosphate (G3P). The sequence is that of Triosephosphate isomerase from Gloeothece citriformis (strain PCC 7424) (Cyanothece sp. (strain PCC 7424)).